We begin with the raw amino-acid sequence, 545 residues long: Solute carrier family 22 member 6 (545 aa).

Residues 1–9 lie on the Cytoplasmic side of the membrane; that stretch reads MAFNDLLKQ. The chain crosses the membrane as a helical span at residues 10–30; sequence VGGVGRFQLIQVTMVVAPLLL. The Extracellular segment spans residues 31–129; that stretch reads MASHNTLQNF…LVCSHRAFRQ (99 aa). Asn-39, Asn-56, Asn-86, Asn-91, and Asn-107 each carry an N-linked (GlcNAc...) asparagine glycan. Residues 130 to 150 form a helical membrane-spanning segment; sequence LAQSLFMVGVLLGAMMFGYLA. The Cytoplasmic portion of the chain corresponds to 151 to 157; the sequence is DRLGRRK. A helical transmembrane segment spans residues 158–177; that stretch reads VLILNYLQTAVSGTCAAYAP. The N-linked (GlcNAc...) asparagine glycan is linked to Asn-178. Residues 178-180 lie on the Extracellular side of the membrane; sequence NYT. Residues 181-201 form a helical membrane-spanning segment; sequence VYCIFRLLSGMSLASIAINCM. The Cytoplasmic portion of the chain corresponds to 202–218; the sequence is TLNMEWMPIHTRAYVGT. The chain crosses the membrane as a helical span at residues 219–239; the sequence is LIGYVYSLGQFLLAGIAYAVP. Residues 240–242 are Extracellular-facing; it reads HWR. The chain crosses the membrane as a helical span at residues 243–263; sequence HLQLAVSVPFFVAFIYSWFFI. Over 264–331 the chain is Cytoplasmic; it reads ESARWYSSSG…ELLRCPTLRR (68 aa). The chain crosses the membrane as a helical span at residues 332–352; that stretch reads LFLCLSMLWFATSFAYYGLVM. The Extracellular portion of the chain corresponds to 353–362; it reads DLQGFGVSMY. A helical transmembrane segment spans residues 363–383; the sequence is LIQVIFGAVDLPAKFVCFLVI. The Cytoplasmic segment spans residues 384–389; the sequence is NSMGRR. The chain crosses the membrane as a helical span at residues 390-410; it reads PAQLASLLLAGICILVNGIIP. The Extracellular portion of the chain corresponds to 411-419; the sequence is RGHTIIRTS. Residues 420 to 440 traverse the membrane as a helical segment; the sequence is LAVLGKGCLASSFNCIFLYTG. At 441–450 the chain is on the cytoplasmic side; sequence ELYPTMIRQT. The chain crosses the membrane as a helical span at residues 451–471; that stretch reads GLGMGSTMARVGSIVSPLISM. The Extracellular portion of the chain corresponds to 472 to 478; that stretch reads TAEFYPS. Residues 479 to 499 traverse the membrane as a helical segment; the sequence is IPLFIFGAVPVAASAVTALLP. The Cytoplasmic segment spans residues 500-545; that stretch reads ETLGQPLPDTVQDLKSRSRGKQKQQQLEQQKQMIPLQVSTQEKNGL. Positions 515-545 are disordered; that stretch reads SRSRGKQKQQQLEQQKQMIPLQVSTQEKNGL. The segment covering 522–531 has biased composition (low complexity); that stretch reads KQQQLEQQKQ. Polar residues predominate over residues 536–545; the sequence is QVSTQEKNGL.

Belongs to the major facilitator (TC 2.A.1) superfamily. Organic cation transporter (TC 2.A.1.19) family. Glycosylated. Glycosylation is necessary for proper targeting of the transporter to the plasma membrane. In terms of tissue distribution, expressed in kidney. In kidney, restricted to the proximal convoluted tubule (representing S1 and S2 segments). In brain, expressed in neurons of the cortex cerebri and hippocampus as well as in the ependymal cell layer of the choroid plexus.

The protein resides in the basolateral cell membrane. Its subcellular location is the basal cell membrane. The enzyme catalyses (6R)-L-erythro-5,6,7,8-tetrahydrobiopterin(out) + a dicarboxylate(in) = (6R)-L-erythro-5,6,7,8-tetrahydrobiopterin(in) + a dicarboxylate(out). It catalyses the reaction L-erythro-7,8-dihydrobiopterin(out) + a dicarboxylate(in) = L-erythro-7,8-dihydrobiopterin(in) + a dicarboxylate(out). The catalysed reaction is L-sepiapterin(out) + a dicarboxylate(in) = L-sepiapterin(in) + a dicarboxylate(out). It carries out the reaction prostaglandin F2alpha(out) + a dicarboxylate(in) = prostaglandin F2alpha(in) + a dicarboxylate(out). The enzyme catalyses prostaglandin E2(out) + a dicarboxylate(in) = prostaglandin E2(in) + a dicarboxylate(out). It catalyses the reaction 3',5'-cyclic AMP(out) + a dicarboxylate(in) = 3',5'-cyclic AMP(in) + a dicarboxylate(out). The catalysed reaction is 3',5'-cyclic GMP(out) + a dicarboxylate(in) = 3',5'-cyclic GMP(in) + a dicarboxylate(out). It carries out the reaction urate(out) + a dicarboxylate(in) = urate(in) + a dicarboxylate(out). The enzyme catalyses kynurenate(out) + glutarate(in) = kynurenate(in) + glutarate(out). It catalyses the reaction (indol-3-yl)acetate(out) + a dicarboxylate(in) = (indol-3-yl)acetate(in) + a dicarboxylate(out). The catalysed reaction is indoxyl sulfate(out) + a dicarboxylate(in) = indoxyl sulfate(in) + a dicarboxylate(out). It carries out the reaction N-benzoylglycine(out) + a dicarboxylate(in) = N-benzoylglycine(in) + a dicarboxylate(out). The enzyme catalyses 3-carboxy-4-methyl-5-propyl-2-furanpropanoate(out) + a dicarboxylate(in) = 3-carboxy-4-methyl-5-propyl-2-furanpropanoate(in) + a dicarboxylate(out). Its function is as follows. Secondary active transporter that functions as a Na(+)-independent organic anion (OA)/dicarboxylate antiporter where the uptake of one molecule of OA into the cell is coupled with an efflux of one molecule of intracellular dicarboxylate such as 2-oxoglutarate or glutarate. Mediates the uptake of OA across the basolateral side of proximal tubule epithelial cells, thereby contributing to the renal elimination of endogenous OA from the systemic circulation into the urine. Functions as a biopterin transporters involved in the uptake and the secretion of coenzymes tetrahydrobiopterin (BH4), dihydrobiopterin (BH2) and sepiapterin to urine, thereby determining baseline levels of blood biopterins. Transports prostaglandin E2 (PGE2) and prostaglandin F2-alpha (PGF2-alpha) and may contribute to their renal excretion. Involved in the transport of neuroactive tryptophan metabolites kynurenate (KYNA) and xanthurenate (XA). May transport glutamate. Also involved in the disposition of uremic toxins and potentially toxic xenobiotics by the renal organic anion secretory pathway, helping reduce their undesired toxicological effects on the body. Uremic toxins include the indoxyl sulfate (IS), hippurate/N-benzoylglycine (HA), indole acetate (IA) and 3-carboxy-4- methyl-5-propyl-2-furanpropionate(CMPF) and urate. Xenobiotics include the mycotoxin ochratoxin (OTA). May also contribute to the transport of organic compounds in testes across the blood-testis-barrier. This Mus musculus (Mouse) protein is Solute carrier family 22 member 6.